The chain runs to 223 residues: Chalcone--flavanone isomerase (223 aa).

The substrate site is built by Thr-50, Asn-114, and Thr-191.

It belongs to the chalcone isomerase family.

It carries out the reaction a chalcone = a flavanone.. The protein operates within secondary metabolite biosynthesis; flavonoid biosynthesis. Catalyzes the intramolecular cyclization of bicyclic chalcones into tricyclic (S)-flavanones. Responsible for the isomerization of 4,2',4',6'-tetrahydroxychalcone (also termed chalcone) into naringenin. This Pisum sativum (Garden pea) protein is Chalcone--flavanone isomerase (CHI).